An 85-amino-acid polypeptide reads, in one-letter code: Putative membrane protein insertion efficiency factor (85 aa).

It belongs to the UPF0161 family.

Its subcellular location is the cell inner membrane. Could be involved in insertion of integral membrane proteins into the membrane. This Vibrio cholerae serotype O1 (strain ATCC 39315 / El Tor Inaba N16961) protein is Putative membrane protein insertion efficiency factor.